The sequence spans 226 residues: Enolase-phosphatase E1 (226 aa).

Belongs to the HAD-like hydrolase superfamily. MasA/MtnC family. Monomer. The cofactor is Mg(2+).

The catalysed reaction is 5-methylsulfanyl-2,3-dioxopentyl phosphate + H2O = 1,2-dihydroxy-5-(methylsulfanyl)pent-1-en-3-one + phosphate. Its pathway is amino-acid biosynthesis; L-methionine biosynthesis via salvage pathway; L-methionine from S-methyl-5-thio-alpha-D-ribose 1-phosphate: step 3/6. It participates in amino-acid biosynthesis; L-methionine biosynthesis via salvage pathway; L-methionine from S-methyl-5-thio-alpha-D-ribose 1-phosphate: step 4/6. Bifunctional enzyme that catalyzes the enolization of 2,3-diketo-5-methylthiopentyl-1-phosphate (DK-MTP-1-P) into the intermediate 2-hydroxy-3-keto-5-methylthiopentenyl-1-phosphate (HK-MTPenyl-1-P), which is then dephosphorylated to form the acireductone 1,2-dihydroxy-3-keto-5-methylthiopentene (DHK-MTPene). This chain is Enolase-phosphatase E1, found in Shewanella oneidensis (strain ATCC 700550 / JCM 31522 / CIP 106686 / LMG 19005 / NCIMB 14063 / MR-1).